The chain runs to 302 residues: Pseudouridine-5'-phosphate glycosidase (302 aa).

The Proton donor role is filled by Glu-25. Residues Lys-86 and Val-106 each coordinate substrate. Asp-138 provides a ligand contact to Mn(2+). 140–142 (SAD) contributes to the substrate binding site. Lys-159 serves as the catalytic Nucleophile.

Belongs to the pseudouridine-5'-phosphate glycosidase family. In terms of assembly, homotrimer. Mn(2+) serves as cofactor.

The enzyme catalyses D-ribose 5-phosphate + uracil = psi-UMP + H2O. Functionally, catalyzes the reversible cleavage of pseudouridine 5'-phosphate (PsiMP) to ribose 5-phosphate and uracil. Functions biologically in the cleavage direction, as part of a pseudouridine degradation pathway. The protein is Pseudouridine-5'-phosphate glycosidase of Jannaschia sp. (strain CCS1).